Here is a 596-residue protein sequence, read N- to C-terminus: Lamin-B2 (596 aa).

Positions 1 to 20 (MASLPPHAGPATPLSPTRLS) are disordered. The interval 1–26 (MASLPPHAGPATPLSPTRLSRLQEKE) is head. The residue at position 12 (Thr-12) is a Phosphothreonine. Ser-15 carries the post-translational modification Phosphoserine. The IF rod domain occupies 24–380 (EKEELRELND…KLLEGEEERL (357 aa)). Residues 27–61 (ELRELNDRLAHYIDRVRALELENDRLLLRISEKEE) form a coil 1A region. At Lys-59 the chain carries N6-acetyllysine; alternate. A Glycyl lysine isopeptide (Lys-Gly) (interchain with G-Cter in SUMO2); alternate cross-link involves residue Lys-59. Residues 62–73 (VTTREVSGIKTL) form a linker 1 region. The segment at 74-207 (YESELADARR…AFSKSVFEEE (134 aa)) is coil 1B. Glycyl lysine isopeptide (Lys-Gly) (interchain with G-Cter in SUMO2) cross-links involve residues Lys-173 and Lys-233. Residues 208 to 234 (VRETRRRHERRLVEVDSSRQQEYDFKM) are linker 2. Residues 235 to 378 (AQALEDLRSQ…YRKLLEGEEE (144 aa)) form a coil 2 region. Residues Ser-294 and Ser-385 each carry the phosphoserine modification. The disordered stretch occupies residues 376 to 440 (EEERLKLSPS…ASRVSSGSRL (65 aa)). The interval 379–596 (RLKLSPSPSS…RTTSRGCRLM (218 aa)) is tail. Positions 382–403 (LSPSPSSRITISRATSSSSSSS) are enriched in low complexity. An O-linked (GlcNAc) threonine glycan is attached at Thr-391. Ser-398, Ser-400, and Ser-402 each carry phosphoserine. Omega-N-methylarginine is present on Arg-413. A Nuclear localization signal motif is present at residues 415-420 (KRRRLE). Residues 425–439 (SGSPSRASRVSSGSR) are compositionally biased toward low complexity. The region spanning 438–559 (SRLAQQTVAT…VKAAKHSSVQ (122 aa)) is the LTD domain. Lys-465 is covalently cross-linked (Glycyl lysine isopeptide (Lys-Gly) (interchain with G-Cter in SUMO2)). The residue at position 473 (Ser-473) is a Phosphoserine. The tract at residues 552 to 596 (AAKHSSVQGRENGEEEEEEEAEFGEEDLFHQQGDPRTTSRGCRLM) is disordered. Over residues 564-577 (GEEEEEEEAEFGEE) the composition is skewed to acidic residues. The span at 585-596 (DPRTTSRGCRLM) shows a compositional bias: polar residues. Cys-593 carries the post-translational modification Cysteine methyl ester. Cys-593 is lipidated: S-farnesyl cysteine. Residues 594 to 596 (RLM) constitute a propeptide, removed in mature form.

Belongs to the intermediate filament family. In terms of assembly, dimer. Lamin dimers then assemble into dimeric head-to-tail polymers. Ultimately, two head-to-tail polymers assemble laterally into a protofilament with a uniformly shaped rod of 3.5 nm in diameter. Interacts with TMEM43. B-type lamins undergo a series of modifications, such as farnesylation and phosphorylation. Increased phosphorylation of the lamins occurs before envelope disintegration and probably plays a role in regulating lamin associations. In terms of processing, phosphorylation plays a key role in lamin organization, subcellular localization and nuclear envelope disintegration. Phosphorylation by CDK1 at Ser-15 and Ser-385 at the onset of mitosis drives lamin disassembly and nuclear envelope breakdown. In terms of tissue distribution, germ cell-specific.

It localises to the nucleus lamina. In terms of biological role, lamins are intermediate filament proteins that assemble into a filamentous meshwork, and which constitute the major components of the nuclear lamina, a fibrous layer on the nucleoplasmic side of the inner nuclear membrane. Lamins provide a framework for the nuclear envelope, bridging the nuclear envelope and chromatin, thereby playing an important role in nuclear assembly, chromatin organization, nuclear membrane and telomere dynamics. The structural integrity of the lamina is strictly controlled by the cell cycle, as seen by the disintegration and formation of the nuclear envelope in prophase and telophase, respectively. The protein is Lamin-B2 (Lmnb2) of Mus musculus (Mouse).